Consider the following 462-residue polypeptide: ATP synthase subunit beta (462 aa).

151 to 158 (GGAGVGKT) is an ATP binding site.

The protein belongs to the ATPase alpha/beta chains family. F-type ATPases have 2 components, CF(1) - the catalytic core - and CF(0) - the membrane proton channel. CF(1) has five subunits: alpha(3), beta(3), gamma(1), delta(1), epsilon(1). CF(0) has four main subunits: a(1), b(1), b'(1) and c(9-12).

It is found in the cell inner membrane. The enzyme catalyses ATP + H2O + 4 H(+)(in) = ADP + phosphate + 5 H(+)(out). Functionally, produces ATP from ADP in the presence of a proton gradient across the membrane. The catalytic sites are hosted primarily by the beta subunits. In Chlorobium phaeovibrioides (strain DSM 265 / 1930) (Prosthecochloris vibrioformis (strain DSM 265)), this protein is ATP synthase subunit beta.